Reading from the N-terminus, the 193-residue chain is Probable GTP-binding protein EngB (193 aa).

Positions 22–193 constitute an EngB-type G domain; that stretch reads QLPEFALAGR…EAWGALQKWM (172 aa). GTP contacts are provided by residues 30–37, 57–61, 75–78, 142–145, and 174–176; these read GRSNVGKS, GKTQT, DVPG, TKAD, and FSA. Positions 37 and 59 each coordinate Mg(2+).

Belongs to the TRAFAC class TrmE-Era-EngA-EngB-Septin-like GTPase superfamily. EngB GTPase family. It depends on Mg(2+) as a cofactor.

Necessary for normal cell division and for the maintenance of normal septation. The sequence is that of Probable GTP-binding protein EngB from Anoxybacillus flavithermus (strain DSM 21510 / WK1).